Consider the following 250-residue polypeptide: Probable transcriptional regulatory protein Mmc1_0479 (250 aa).

This sequence belongs to the TACO1 family.

The protein localises to the cytoplasm. The polypeptide is Probable transcriptional regulatory protein Mmc1_0479 (Magnetococcus marinus (strain ATCC BAA-1437 / JCM 17883 / MC-1)).